A 232-amino-acid polypeptide reads, in one-letter code: Probable metallo-hydrolase M6_Spy0554 (232 aa).

Positions 75, 77, 79, 80, 155, 174, and 215 each coordinate Zn(2+).

Requires Zn(2+) as cofactor.

This Streptococcus pyogenes serotype M6 (strain ATCC BAA-946 / MGAS10394) protein is Probable metallo-hydrolase M6_Spy0554.